A 309-amino-acid polypeptide reads, in one-letter code: Ornithine carbamoyltransferase (309 aa).

Carbamoyl phosphate contacts are provided by residues 56–59, Gln-83, Arg-107, and 134–137; these read STRT and HPCQ. L-ornithine contacts are provided by residues Asn-165, Asp-223, and 227–228; that span reads SM. Carbamoyl phosphate contacts are provided by residues 263–264 and Arg-291; that span reads CL.

It belongs to the aspartate/ornithine carbamoyltransferase superfamily. OTCase family.

It localises to the cytoplasm. It carries out the reaction carbamoyl phosphate + L-ornithine = L-citrulline + phosphate + H(+). It participates in amino-acid biosynthesis; L-arginine biosynthesis; L-arginine from L-ornithine and carbamoyl phosphate: step 1/3. Reversibly catalyzes the transfer of the carbamoyl group from carbamoyl phosphate (CP) to the N(epsilon) atom of ornithine (ORN) to produce L-citrulline. The sequence is that of Ornithine carbamoyltransferase from Burkholderia cenocepacia (strain HI2424).